Reading from the N-terminus, the 400-residue chain is Unsaturated glucuronyl hydrolase (400 aa).

The signal sequence occupies residues Met-1–Cys-20. The active-site Nucleophile is the Asp-120. Asp-181 functions as the Proton donor in the catalytic mechanism.

The protein belongs to the glycosyl hydrolase 88 family.

The protein localises to the cell surface. Functionally, unsaturated glucuronyl hydrolase involved in ulvan degradation. Ulvan is the main polysaccharide component of the Ulvales (green seaweed) cell wall. It is composed of disaccharide building blocks comprising 3-sulfated rhamnose (Rha3S) linked to D-glucuronic acid (GlcA), L-iduronic acid (IduA), or D-xylose (Xyl). Unsaturated glucuronyl hydrolase catalyzes the cleavage of the unsaturated 4-deoxy-L-threo-hex-4-enopyranosiduronic acid (deltaUA) at the non-reducing end of ulvan oligomers, thus forming 5-dehydro-4-deoxy-D-glucuronate. The chain is Unsaturated glucuronyl hydrolase from Formosa agariphila (strain DSM 15362 / KCTC 12365 / LMG 23005 / KMM 3901 / M-2Alg 35-1).